The following is a 101-amino-acid chain: Putative defensin-like protein 86 (101 aa).

The first 27 residues, 1 to 27, serve as a signal peptide directing secretion; that stretch reads MAITKMSSLIILSLMMLTFIYIPMISG. Cystine bridges form between Cys35–Cys71, Cys39–Cys59, Cys45–Cys69, and Cys49–Cys70.

Belongs to the DEFL family.

Its subcellular location is the secreted. This chain is Putative defensin-like protein 86 (LCR82), found in Arabidopsis thaliana (Mouse-ear cress).